Consider the following 37-residue polypeptide: Large ribosomal subunit protein bL36 (37 aa).

This sequence belongs to the bacterial ribosomal protein bL36 family.

This Syntrophotalea carbinolica (strain DSM 2380 / NBRC 103641 / GraBd1) (Pelobacter carbinolicus) protein is Large ribosomal subunit protein bL36.